Here is a 656-residue protein sequence, read N- to C-terminus: L-type lectin-domain containing receptor kinase S.1 (656 aa).

The signal sequence occupies residues 1–29; sequence MSWQWRRRQWPSPLLLILIVLHLVSSSSA. The legume-lectin like stretch occupies residues 30–273; that stretch reads IDFLYNSFSS…ARRILAWSLS (244 aa). The Extracellular segment spans residues 30 to 304; that stretch reads IDFLYNSFSS…SSSLSTGAIA (275 aa). N-linked (GlcNAc...) asparagine glycans are attached at residues Asn42, Asn63, Asn121, Asn139, Asn191, Asn219, Asn282, and Asn293. A helical membrane pass occupies residues 305–325; the sequence is GIVIGCVVFVALIGFGGYLIW. The Cytoplasmic portion of the chain corresponds to 326–656; that stretch reads KKLMREEEEE…AAADSTAAHA (331 aa). In terms of domain architecture, Protein kinase spans 361–639; the sequence is FSNDRLLGSG…LLGSPQEDLL (279 aa). ATP-binding positions include 367 to 375 and Lys389; that span reads LGSGGFGKV. Residue Asp485 is the Proton acceptor of the active site.

This sequence in the C-terminal section; belongs to the protein kinase superfamily. Ser/Thr protein kinase family. In the N-terminal section; belongs to the leguminous lectin family.

It localises to the cell membrane. The catalysed reaction is L-seryl-[protein] + ATP = O-phospho-L-seryl-[protein] + ADP + H(+). The enzyme catalyses L-threonyl-[protein] + ATP = O-phospho-L-threonyl-[protein] + ADP + H(+). Involved in resistance response to the pathogenic oomycetes Phytophthora infestans and Phytophthora capsici and to the pathogenic bacteria Pseudomonas syringae. This chain is L-type lectin-domain containing receptor kinase S.1, found in Arabidopsis thaliana (Mouse-ear cress).